A 658-amino-acid chain; its full sequence is Transport protein particle subunit trs85-1 (658 aa).

This sequence belongs to the TRS85 family. As to quaternary structure, part of the multisubunit TRAPP (transport protein particle) complexes I and II.

The protein resides in the golgi apparatus. It localises to the cis-Golgi network. Its function is as follows. Component of the TRAPP I and TRAPP II complexes. TRAPP I plays a key role in the late stages of endoplasmic reticulum to Golgi traffic. TRAPP II seems to play a role in intra-Golgi transport. Has a role late in meiosis following DNA replication. In Schizosaccharomyces pombe (strain 972 / ATCC 24843) (Fission yeast), this protein is Transport protein particle subunit trs85-1 (trs85-1).